Consider the following 498-residue polypeptide: UDP-N-acetylmuramoyl-L-alanyl-D-glutamate--2,6-diaminopimelate ligase (498 aa).

S29 contacts UDP-N-acetyl-alpha-D-muramoyl-L-alanyl-D-glutamate. 120–126 (GTDGKTS) provides a ligand contact to ATP. UDP-N-acetyl-alpha-D-muramoyl-L-alanyl-D-glutamate is bound by residues 162 to 163 (TT), S189, Q195, and R197. K229 carries the post-translational modification N6-carboxylysine. Meso-2,6-diaminopimelate contacts are provided by residues R392, 416 to 419 (DNPR), G466, and E470. The Meso-diaminopimelate recognition motif signature appears at 416–419 (DNPR).

It belongs to the MurCDEF family. MurE subfamily. Requires Mg(2+) as cofactor. In terms of processing, carboxylation is probably crucial for Mg(2+) binding and, consequently, for the gamma-phosphate positioning of ATP.

The protein localises to the cytoplasm. It catalyses the reaction UDP-N-acetyl-alpha-D-muramoyl-L-alanyl-D-glutamate + meso-2,6-diaminopimelate + ATP = UDP-N-acetyl-alpha-D-muramoyl-L-alanyl-gamma-D-glutamyl-meso-2,6-diaminopimelate + ADP + phosphate + H(+). The protein operates within cell wall biogenesis; peptidoglycan biosynthesis. Its function is as follows. Catalyzes the addition of meso-diaminopimelic acid to the nucleotide precursor UDP-N-acetylmuramoyl-L-alanyl-D-glutamate (UMAG) in the biosynthesis of bacterial cell-wall peptidoglycan. The sequence is that of UDP-N-acetylmuramoyl-L-alanyl-D-glutamate--2,6-diaminopimelate ligase from Alkalilimnicola ehrlichii (strain ATCC BAA-1101 / DSM 17681 / MLHE-1).